Here is a 244-residue protein sequence, read N- to C-terminus: Globin-like protein 9 (244 aa).

Positions 1 to 38 are disordered; sequence MRRMAKYDRSYSMQDAHGPNGLARRGTQRGCSRSKSTR. The Globin domain maps to 47-200; it reads SLTFSQKQAL…LIDELRGGFE (154 aa). Heme-binding residues include His-111 and His-143.

Belongs to the globin family.

The polypeptide is Globin-like protein 9 (Caenorhabditis briggsae).